A 311-amino-acid chain; its full sequence is Malate dehydrogenase (311 aa).

NAD(+) contacts are provided by residues 7–13 (GAAGGIG) and D34. Residues R81 and R87 each contribute to the substrate site. NAD(+)-binding positions include N94 and 117–119 (ITN). The substrate site is built by N119 and R153. H177 functions as the Proton acceptor in the catalytic mechanism. Residue M227 coordinates NAD(+).

This sequence belongs to the LDH/MDH superfamily. MDH type 1 family. In terms of assembly, homodimer.

It catalyses the reaction (S)-malate + NAD(+) = oxaloacetate + NADH + H(+). Functionally, catalyzes the reversible oxidation of malate to oxaloacetate. This Shewanella halifaxensis (strain HAW-EB4) protein is Malate dehydrogenase.